We begin with the raw amino-acid sequence, 105 residues long: Large ribosomal subunit protein uL24 (105 aa).

This sequence belongs to the universal ribosomal protein uL24 family. In terms of assembly, part of the 50S ribosomal subunit.

One of two assembly initiator proteins, it binds directly to the 5'-end of the 23S rRNA, where it nucleates assembly of the 50S subunit. Its function is as follows. One of the proteins that surrounds the polypeptide exit tunnel on the outside of the subunit. This chain is Large ribosomal subunit protein uL24, found in Clostridium novyi (strain NT).